Reading from the N-terminus, the 125-residue chain is Snaclec VP12 subunit B (125 aa).

3 cysteine pairs are disulfide-bonded: cysteine 4–cysteine 15, cysteine 32–cysteine 121, and cysteine 98–cysteine 113. A C-type lectin domain is found at 11–122; the sequence is FEKYCYKVFQ…CNDPRYFVCK (112 aa).

Belongs to the snaclec family. As to quaternary structure, heterodimer of subunits alpha and beta; disulfide-linked. As to expression, expressed by the venom gland.

The protein localises to the secreted. Functionally, inhibits integrin alpha-2/beta-1- (ITGA2/ITGB1) dependent melanoma metastasis. This is Snaclec VP12 subunit B from Daboia palaestinae (Palestine viper).